A 265-amino-acid chain; its full sequence is O-methyltransferase NEC2 (265 aa).

The protein belongs to the methyltransferase superfamily.

It carries out the reaction desmethylnectriapyrone + S-adenosyl-L-methionine = nectriapyrone + S-adenosyl-L-homocysteine + H(+). O-methyltransferase; part of the gene cluster that mediates the biosynthesis of nectriapyrone and its analogs phomopyrone A, acropyrone and zaepyrone. The nectriapyrone biosynthetic gene cluster consists of two genes, the highly reducing polyketide synthase NEC1 that produces a demethylated analog of nectriapyrone from one unit of acetyl-CoA and one unit of malonyl-CoA; and the O-methyltransferase NEC2 that further methylates the NEC1 product to yield nectriapyrone. Nectriapyrone is further hydrolyzed to nectriapyrone D, also known as gulypyrone B, by an unidentified hydrolase localized outside the nectriapyrone cluster. This chain is O-methyltransferase NEC2, found in Pyricularia oryzae (strain 70-15 / ATCC MYA-4617 / FGSC 8958) (Rice blast fungus).